The chain runs to 236 residues: Thrombin-like enzyme kangshuanmei (236 aa).

In terms of domain architecture, Peptidase S1 spans 1 to 227 (VIGGDECNIN…HLDWIQSIIA (227 aa)). Cystine bridges form between Cys-7/Cys-141, Cys-28/Cys-44, Cys-78/Cys-234, Cys-120/Cys-188, Cys-152/Cys-167, and Cys-178/Cys-203. Catalysis depends on His-43, which acts as the Charge relay system. A glycan (N-linked (GlcNAc...) asparagine) is linked at Asn-81. The Charge relay system role is filled by Asp-88. Asn-99 and Asn-148 each carry an N-linked (GlcNAc...) asparagine glycan. The active-site Charge relay system is the Ser-182. Asn-229 carries an N-linked (GlcNAc...) asparagine glycan.

This sequence belongs to the peptidase S1 family. Snake venom subfamily. Monomer. N-glycosylated by units composed of Fuc, Man, GlcNAc, Gal and NeuAC residues. As to expression, expressed by the venom gland.

It localises to the secreted. Inhibited by 4-(2-aminoethyl)-benzensulfonyl fluoride. Not inhibited by antithrombin-III. Thrombin-like snake venom serine protease. Cleaves bonds after Arg and Lys, converts fibrinogen (FGA and FGB) to fibrin and releases both fibrinopeptides A and B, and fibrinogen peptide Bbeta1-42. Has a blood clotting activity. The polypeptide is Thrombin-like enzyme kangshuanmei (Gloydius brevicauda (Korean slamosa snake)).